The primary structure comprises 311 residues: Malate dehydrogenase (311 aa).

Residues Gly-7–Gly-13 and Asp-34 each bind NAD(+). Substrate is bound by residues Arg-81 and Arg-87. NAD(+) is bound by residues Asn-94 and Ile-117–Asn-119. Substrate contacts are provided by Asn-119 and Arg-153. His-177 (proton acceptor) is an active-site residue. Residue Met-227 coordinates NAD(+).

This sequence belongs to the LDH/MDH superfamily. MDH type 1 family. Homodimer.

It catalyses the reaction (S)-malate + NAD(+) = oxaloacetate + NADH + H(+). In terms of biological role, catalyzes the reversible oxidation of malate to oxaloacetate. This Shewanella frigidimarina (strain NCIMB 400) protein is Malate dehydrogenase.